The sequence spans 258 residues: Axonemal dynein light intermediate polypeptide 1 (258 aa).

Disordered regions lie at residues 1–60 (MIPP…CVPD) and 202–231 (DLERQVNEQKAKCEATEKRESERRQVEEKK). Residues 176–255 (MRKALQAEQG…LKAQLEGIIA (80 aa)) adopt a coiled-coil conformation.

The protein belongs to the inner dynein arm light chain family. In terms of assembly, interacts with CFAP45. Interacts with DYNC1H1. Predominantly expressed in the testis, also detected at lower levels in several tissues expressing cilia. Strongly expressed in elongating spermatid cells (at protein level).

It localises to the cell projection. The protein localises to the cilium. The protein resides in the flagellum. It is found in the dynein axonemal particle. Its subcellular location is the cytoplasm. Functionally, involved in sperm flagellum assembly. The sequence is that of Axonemal dynein light intermediate polypeptide 1 from Mus musculus (Mouse).